Consider the following 320-residue polypeptide: Tyrosine phosphatase H3 (320 aa).

A Tyrosine-protein phosphatase domain is found at 22 to 309 (NFWEFVRLEH…AFCYKAVRYA (288 aa)). Cys250 (phosphocysteine intermediate) is an active-site residue.

The protein belongs to the protein-tyrosine phosphatase family.

It carries out the reaction O-phospho-L-tyrosyl-[protein] + H2O = L-tyrosyl-[protein] + phosphate. Functionally, suppresses host immune cell adhesion and phagocytosis. This is Tyrosine phosphatase H3 (H3) from Microplitis demolitor (Parasitoid wasp).